We begin with the raw amino-acid sequence, 200 residues long: Ribonuclease HII (200 aa).

One can recognise an RNase H type-2 domain in the interval glutamine 11 to glycine 200. A divalent metal cation-binding residues include aspartate 17, glutamate 18, and aspartate 109.

This sequence belongs to the RNase HII family. It depends on Mn(2+) as a cofactor. The cofactor is Mg(2+).

It is found in the cytoplasm. The catalysed reaction is Endonucleolytic cleavage to 5'-phosphomonoester.. Its function is as follows. Endonuclease that specifically degrades the RNA of RNA-DNA hybrids. This chain is Ribonuclease HII, found in Hamiltonella defensa subsp. Acyrthosiphon pisum (strain 5AT).